The sequence spans 295 residues: Putative nudix hydrolase 7 (295 aa).

The region spanning 9–182 is the Nudix hydrolase domain; it reads SWRSAASIIL…KYALPPPQVY (174 aa). Residues 52-73 carry the Nudix box motif; sequence TDAKLGDEFRIAAVRELFEESG. 2 residues coordinate Mg(2+): E67 and E71.

It belongs to the Nudix hydrolase family. Mg(2+) is required as a cofactor. It depends on Mn(2+) as a cofactor.

Probably mediates the hydrolysis of some nucleoside diphosphate derivatives. The sequence is that of Putative nudix hydrolase 7 (ndx-7) from Caenorhabditis elegans.